Here is a 210-residue protein sequence, read N- to C-terminus: dTTP/UTP pyrophosphatase (210 aa).

D89 (proton acceptor) is an active-site residue.

The protein belongs to the Maf family. YhdE subfamily. Requires a divalent metal cation as cofactor.

Its subcellular location is the cytoplasm. The enzyme catalyses dTTP + H2O = dTMP + diphosphate + H(+). The catalysed reaction is UTP + H2O = UMP + diphosphate + H(+). Nucleoside triphosphate pyrophosphatase that hydrolyzes dTTP and UTP. May have a dual role in cell division arrest and in preventing the incorporation of modified nucleotides into cellular nucleic acids. This Burkholderia orbicola (strain AU 1054) protein is dTTP/UTP pyrophosphatase.